We begin with the raw amino-acid sequence, 348 residues long: D-alanine--D-alanine ligase (348 aa).

The ATP-grasp domain occupies 136-344; it reads KSVFKSYNLP…LEKLVASLIE (209 aa). Position 171–226 (171–226) interacts with ATP; sequence NKIINYPCFIKPANLGSSVGITKAYSKEEFITGIEFAAKYDERIIVEKSIEGRELE. Residues Asp-297, Glu-311, and Asn-313 each contribute to the Mg(2+) site.

Belongs to the D-alanine--D-alanine ligase family. It depends on Mg(2+) as a cofactor. The cofactor is Mn(2+).

The protein localises to the cytoplasm. It catalyses the reaction 2 D-alanine + ATP = D-alanyl-D-alanine + ADP + phosphate + H(+). The protein operates within cell wall biogenesis; peptidoglycan biosynthesis. Cell wall formation. This chain is D-alanine--D-alanine ligase, found in Prochlorococcus marinus (strain NATL1A).